A 167-amino-acid polypeptide reads, in one-letter code: Small ribosomal subunit protein uS5 (167 aa).

Residues 12 to 75 (LQEKLIAVNR…EKARRNMVTV (64 aa)) enclose the S5 DRBM domain.

The protein belongs to the universal ribosomal protein uS5 family. Part of the 30S ribosomal subunit. Contacts proteins S4 and S8.

Functionally, with S4 and S12 plays an important role in translational accuracy. Its function is as follows. Located at the back of the 30S subunit body where it stabilizes the conformation of the head with respect to the body. In Shewanella sp. (strain W3-18-1), this protein is Small ribosomal subunit protein uS5.